Consider the following 352-residue polypeptide: Ubiquitin thioesterase otulin (352 aa).

The disordered stretch occupies residues 1–49 (MSRGTMPQPGAWPGASCAETPAREAGAAARDGGKVTAGAQPRAATRCPA). Residues 18-30 (AETPAREAGAAAR) are compositionally biased toward low complexity. Positions 49–73 (AEHEEDMYRAADEIEKEKELLIHER) form a coiled coil. Residues 52–57 (EEDMYR) carry the PIM motif motif. Y56 carries the phosphotyrosine modification. Linear diubiquitin binding stretches follow at residues 95-96 (EW) and 124-126 (RGD). The 229-residue stretch at 118–346 (TSIRRVRGDN…DRHYNIPVRV (229 aa)) folds into the OTU domain. D126 is a catalytic residue. Catalysis depends on C129, which acts as the Nucleophile. Linear diubiquitin binding regions lie at residues 255–259 (FFSVL), 283–289 (TGGLEQV), and 336–338 (DDR). H339 is an active-site residue. The PDZ-binding motif lies at 349–352 (ETSV).

Belongs to the peptidase C65 family. Otulin subfamily. As to quaternary structure, interacts (via the PUB domain) with RNF31 (via the PIM motif); the interaction is direct. Interacts with DVL2. Post-translationally, ubiquitinated. Acetylated. In terms of processing, phosphorylated. Phosphorylation at Tyr-56 prevents interaction with RNF31; dephosphorylation promotes interaction with RNF31 and the LUBAC complex.

Its subcellular location is the cytoplasm. The enzyme catalyses Thiol-dependent hydrolysis of ester, thioester, amide, peptide and isopeptide bonds formed by the C-terminal Gly of ubiquitin (a 76-residue protein attached to proteins as an intracellular targeting signal).. Its function is as follows. Deubiquitinase that specifically removes linear ('Met-1'-linked) polyubiquitin chains to substrates and acts as a regulator of angiogenesis and innate immune response. Required during angiogenesis, craniofacial and neuronal development by regulating the canonical Wnt signaling together with the LUBAC complex. Acts as a negative regulator of NF-kappa-B by regulating the activity of the LUBAC complex. OTULIN function is mainly restricted to homeostasis of the LUBAC complex: acts by removing 'Met-1'-linked autoubiquitination of the LUBAC complex, thereby preventing inactivation of the LUBAC complex. Acts as a key negative regulator of inflammation by restricting spontaneous inflammation and maintaining immune homeostasis. In myeloid cell, required to prevent unwarranted secretion of cytokines leading to inflammation and autoimmunity by restricting linear polyubiquitin formation. Plays a role in innate immune response by restricting linear polyubiquitin formation on LUBAC complex in response to NOD2 stimulation, probably to limit NOD2-dependent pro-inflammatory signaling. The protein is Ubiquitin thioesterase otulin of Mus musculus (Mouse).